Consider the following 174-residue polypeptide: MKVSDRRKFEKANFDEFESALNNKNDLVHCPSITLFESIPTEVRSFYEDEKSGLIKVVKFRTGAMNRKRSFEKIVISVMVGKNVQKFLTFVEDEPDFQGGPIPSKYLIPKKINLMVYTLFQVHTLKFNRKDYDTLSLFYLNRGYYNELSFPCPGTLSRNSECQAERQLYDAYFH.

This is an uncharacterized protein from Saccharomyces cerevisiae (strain ATCC 204508 / S288c) (Baker's yeast).